We begin with the raw amino-acid sequence, 601 residues long: Elongation factor 4 (601 aa).

In terms of domain architecture, tr-type G spans 8–189 (EQIRNFGIIA…LIVRKAPPPK (182 aa)). 20–25 (DHGKST) contacts GTP.

Belongs to the TRAFAC class translation factor GTPase superfamily. Classic translation factor GTPase family. LepA subfamily.

It localises to the cell membrane. It catalyses the reaction GTP + H2O = GDP + phosphate + H(+). Its function is as follows. Required for accurate and efficient protein synthesis under certain stress conditions. May act as a fidelity factor of the translation reaction, by catalyzing a one-codon backward translocation of tRNAs on improperly translocated ribosomes. Back-translocation proceeds from a post-translocation (POST) complex to a pre-translocation (PRE) complex, thus giving elongation factor G a second chance to translocate the tRNAs correctly. Binds to ribosomes in a GTP-dependent manner. This is Elongation factor 4 from Tropheryma whipplei (strain TW08/27) (Whipple's bacillus).